Reading from the N-terminus, the 460-residue chain is 1-aminocyclopropane-1-carboxylate synthase 11 (460 aa).

Substrate-binding residues include Glu45 and Tyr83. The residue at position 267 (Lys267) is an N6-(pyridoxal phosphate)lysine.

It belongs to the class-I pyridoxal-phosphate-dependent aminotransferase family. As to quaternary structure, homodimer and heterodimer. In vivo, the relevance of heterodimerization with other ACS enzymes is however unsure. Interacts with GRF3. The cofactor is pyridoxal 5'-phosphate. In terms of processing, may be processed at its C-terminus. Expressed in roots.

It catalyses the reaction S-adenosyl-L-methionine = 1-aminocyclopropane-1-carboxylate + S-methyl-5'-thioadenosine + H(+). The protein operates within alkene biosynthesis; ethylene biosynthesis via S-adenosyl-L-methionine; ethylene from S-adenosyl-L-methionine: step 1/2. Its function is as follows. 1-aminocyclopropane-1-carboxylate synthase (ACS) enzymes catalyze the conversion of S-adenosyl-L-methionine (SAM) into 1-aminocyclopropane-1-carboxylate (ACC), a direct precursor of ethylene. The chain is 1-aminocyclopropane-1-carboxylate synthase 11 (ACS11) from Arabidopsis thaliana (Mouse-ear cress).